Reading from the N-terminus, the 188-residue chain is Auxin-induced protein 22C (188 aa).

Positions 13–17 (LRLGL) match the EAR-like (transcriptional repression) motif. Positions 16-57 (GLPGAGGENNTDKDKNKNKKRVFSDIEGENSSSEEDGKKETK) are disordered. The PB1 domain maps to 79 to 167 (KLYVKVSMDG…KRLRIMKRSD (89 aa)).

Belongs to the Aux/IAA family. In terms of assembly, homodimers and heterodimers.

It is found in the nucleus. Aux/IAA proteins are short-lived transcriptional factors that function as repressors of early auxin response genes at low auxin concentrations. Repression is thought to result from the interaction with auxin response factors (ARFs), proteins that bind to the auxin-responsive promoter element (AuxRE). Formation of heterodimers with ARF proteins may alter their ability to modulate early auxin response genes expression. The polypeptide is Auxin-induced protein 22C (AUX22C) (Vigna radiata var. radiata (Mung bean)).